The chain runs to 688 residues: Elongation factor G (688 aa).

Residues 8 to 282 (INFRNFGIMA…AVVDFLPSPV (275 aa)) form the tr-type G domain. GTP contacts are provided by residues 17–24 (AHIDAGKT), 81–85 (DTPGH), and 135–138 (NKMD).

Belongs to the TRAFAC class translation factor GTPase superfamily. Classic translation factor GTPase family. EF-G/EF-2 subfamily.

It is found in the cytoplasm. Its function is as follows. Catalyzes the GTP-dependent ribosomal translocation step during translation elongation. During this step, the ribosome changes from the pre-translocational (PRE) to the post-translocational (POST) state as the newly formed A-site-bound peptidyl-tRNA and P-site-bound deacylated tRNA move to the P and E sites, respectively. Catalyzes the coordinated movement of the two tRNA molecules, the mRNA and conformational changes in the ribosome. This is Elongation factor G (fusA) from Mycoplasma pneumoniae (strain ATCC 29342 / M129 / Subtype 1) (Mycoplasmoides pneumoniae).